The sequence spans 250 residues: Putative B3 domain-containing protein At4g03170 (250 aa).

The span at 1–12 (MANSTGKPTSST) shows a compositional bias: polar residues. The interval 1 to 90 (MANSTGKPTS…EKNQPKRFKK (90 aa)) is disordered. Over residues 34-56 (DREEDIDDEDDIDDEVIDDEDYE) the composition is skewed to acidic residues. Residues 72–84 (QSREREEETEKNQ) show a composition bias toward basic and acidic residues. The segment at residues 137-245 (KKQLMSSDVD…KLCFAIHYVK (109 aa)) is a DNA-binding region (TF-B3).

Its subcellular location is the nucleus. The sequence is that of Putative B3 domain-containing protein At4g03170 from Arabidopsis thaliana (Mouse-ear cress).